The chain runs to 301 residues: N-acetylmuramic acid 6-phosphate etherase (301 aa).

Residues 57-220 enclose the SIS domain; it reads TYEKMLFGGR…STSLMIKKGK (164 aa). Glu85 acts as the Proton donor in catalysis. Glu116 is an active-site residue.

This sequence belongs to the GCKR-like family. MurNAc-6-P etherase subfamily. As to quaternary structure, homodimer.

The enzyme catalyses N-acetyl-D-muramate 6-phosphate + H2O = N-acetyl-D-glucosamine 6-phosphate + (R)-lactate. It functions in the pathway amino-sugar metabolism; N-acetylmuramate degradation. Its function is as follows. Specifically catalyzes the cleavage of the D-lactyl ether substituent of MurNAc 6-phosphate, producing GlcNAc 6-phosphate and D-lactate. The sequence is that of N-acetylmuramic acid 6-phosphate etherase from Clostridium botulinum (strain Eklund 17B / Type B).